The primary structure comprises 623 residues: Myosin light chain kinase 2, skeletal/cardiac muscle (623 aa).

Disordered regions lie at residues 1-179 (MATE…PSCP) and 204-251 (GVPV…QGDT). Residue A2 is modified to N-acetylalanine. Over residues 20-31 (APKAAAGEGPPA) the composition is skewed to low complexity. 2 stretches are compositionally biased toward basic and acidic residues: residues 32–43 (AEKDPGPPDPQK) and 49–89 (DPEK…EKGD). A compositionally biased stretch (low complexity) spans 90–102 (GASAQPSASSQGP). Over residues 150–159 (GEAKEQKKVA) the composition is skewed to basic and acidic residues. Residues S169, S175, and S177 each carry the phosphoserine modification. Low complexity predominate over residues 204-214 (GVPVTPGPTET). Over residues 215–224 (EPAKVAEGEK) the composition is skewed to basic and acidic residues. Positions 312–567 (LNSKEALGGG…AAQCLAHPWL (256 aa)) constitute a Protein kinase domain. Residues 318–326 (LGGGKFGAV) and K341 contribute to the ATP site. D433 acts as the Proton acceptor in catalysis. A Phosphothreonine modification is found at T472. Residues 601-613 (IAVSAANRFKKIS) are calmodulin-binding.

It belongs to the protein kinase superfamily. CAMK Ser/Thr protein kinase family. In terms of assembly, may interact with centrin.

Its subcellular location is the cytoplasm. It catalyses the reaction L-seryl-[myosin light chain] + ATP = O-phospho-L-seryl-[myosin light chain] + ADP + H(+). It carries out the reaction L-threonyl-[myosin light chain] + ATP = O-phospho-L-threonyl-[myosin light chain] + ADP + H(+). Implicated in the level of global muscle contraction and cardiac function. Phosphorylates a specific serine in the N-terminus of a myosin light chain. In Bos taurus (Bovine), this protein is Myosin light chain kinase 2, skeletal/cardiac muscle (MYLK2).